The chain runs to 465 residues: Cysteine--tRNA ligase (465 aa).

Position 29 (Cys29) interacts with Zn(2+). The short motif at 31–41 is the 'HIGH' region element; the sequence is PTVYNYIHIGN. Zn(2+) is bound by residues Cys209, His234, and Glu238. The 'KMSKS' region motif lies at 266–270; sequence KMSKS. ATP is bound at residue Lys269. Ser270 is modified (phosphoserine).

Belongs to the class-I aminoacyl-tRNA synthetase family. Monomer. It depends on Zn(2+) as a cofactor.

The protein resides in the cytoplasm. It carries out the reaction tRNA(Cys) + L-cysteine + ATP = L-cysteinyl-tRNA(Cys) + AMP + diphosphate. This chain is Cysteine--tRNA ligase, found in Bacillus thuringiensis (strain Al Hakam).